We begin with the raw amino-acid sequence, 66 residues long: UPF0391 membrane protein AM1_5042 (66 aa).

The next 2 helical transmembrane spans lie at 4–24 (LTLT…SGIA) and 28–47 (AAIA…LVWP).

Belongs to the UPF0391 family.

The protein localises to the cell membrane. The chain is UPF0391 membrane protein AM1_5042 from Acaryochloris marina (strain MBIC 11017).